The chain runs to 161 residues: Nucleotide-binding protein Sama_2557 (161 aa).

This sequence belongs to the YajQ family.

In terms of biological role, nucleotide-binding protein. This is Nucleotide-binding protein Sama_2557 from Shewanella amazonensis (strain ATCC BAA-1098 / SB2B).